The sequence spans 257 residues: 5-keto-4-deoxy-D-glucarate aldolase (257 aa).

His51 functions as the Proton acceptor in the catalytic mechanism. A substrate-binding site is contributed by Gln152. Position 154 (Glu154) interacts with Mg(2+). Ser179 and Asp180 together coordinate substrate. Asp180 serves as a coordination point for Mg(2+).

This sequence belongs to the HpcH/HpaI aldolase family. KDGluc aldolase subfamily. In terms of assembly, homohexamer; trimer of dimers. Mg(2+) serves as cofactor.

The enzyme catalyses 5-dehydro-4-deoxy-D-glucarate = 2-hydroxy-3-oxopropanoate + pyruvate. The catalysed reaction is 2-dehydro-3-deoxy-D-glucarate = 2-hydroxy-3-oxopropanoate + pyruvate. Its pathway is carbohydrate acid metabolism; galactarate degradation; D-glycerate from galactarate: step 2/3. Catalyzes the reversible retro-aldol cleavage of both 5-keto-4-deoxy-D-glucarate and 2-keto-3-deoxy-D-glucarate to pyruvate and tartronic semialdehyde. This is 5-keto-4-deoxy-D-glucarate aldolase from Citrobacter koseri (strain ATCC BAA-895 / CDC 4225-83 / SGSC4696).